Here is an 825-residue protein sequence, read N- to C-terminus: Actin filament-associated protein 1-like 2 (825 aa).

Position 56 is a phosphotyrosine (Tyr-56). A disordered region spans residues 62 to 163; it reads VNGEQNSASP…SKGKAAPYQW (102 aa). Over residues 80-94 the composition is skewed to polar residues; the sequence is PLTNGEPSQHSSAPQ. A Phosphothreonine modification is found at Thr-113. 2 consecutive PH domains span residues 175 to 271 and 353 to 447; these read DARI…EVSG and SLET…SESG. At Ser-408 the chain carries Phosphoserine. Phosphotyrosine is present on Tyr-413. Ser-484 is subject to Phosphoserine. Residues 571-614 form a disordered region; it reads TLTVDPKPGTTPEEPHTESPGDPEVQQRQPEVQESSEPIEPTPR. The segment covering 593–608 has biased composition (low complexity); the sequence is PEVQQRQPEVQESSEP. Residues 657 to 754 adopt a coiled-coil conformation; it reads AEIKLGKNRT…VKDNLKKAEA (98 aa). Residues 757-801 form a disordered region; it reads VTLGTTVDTTHLDNMSPRPQPKAATPNPPPDSTPVNSASVLKNRP. The segment covering 759-769 has biased composition (polar residues); the sequence is LGTTVDTTHLD.

In terms of assembly, interacts with SRC. Interacts with LCK when tyrosine phosphorylated. In terms of processing, tyrosine phosphorylated (by SRC).

It is found in the cytoplasm. Functionally, may play a role in a signaling cascade by enhancing the kinase activity of SRC. Contributes to SRC-regulated transcription activation. In Mus musculus (Mouse), this protein is Actin filament-associated protein 1-like 2 (Afap1l2).